We begin with the raw amino-acid sequence, 436 residues long: p-aminobenzoyl-glutamate hydrolase subunit A (436 aa).

The protein belongs to the peptidase M20 family. In terms of assembly, forms a heterodimer with AbgB. The cofactor is Mn(2+).

Component of the p-aminobenzoyl-glutamate hydrolase multicomponent enzyme system which catalyzes the cleavage of p-aminobenzoyl-glutamate (PABA-GLU) to form p-aminobenzoate (PABA) and glutamate. AbgAB does not degrade dipeptides and the physiological role of abgABT should be clarified. The protein is p-aminobenzoyl-glutamate hydrolase subunit A (abgA) of Escherichia coli (strain K12).